The following is a 369-amino-acid chain: 1-aminocyclopropane-1-carboxylate oxidase homolog 2 (369 aa).

One can recognise a Fe2OG dioxygenase domain in the interval 217–318 (KGLRMLCHYF…VSVACFFHTH (102 aa)). Residues His-241, Asp-243, and His-297 each contribute to the Fe cation site.

It belongs to the iron/ascorbate-dependent oxidoreductase family. Fe cation serves as cofactor.

The chain is 1-aminocyclopropane-1-carboxylate oxidase homolog 2 from Arabidopsis thaliana (Mouse-ear cress).